The following is a 100-amino-acid chain: Urease subunit gamma (100 aa).

It belongs to the urease gamma subunit family. In terms of assembly, heterotrimer of UreA (gamma), UreB (beta) and UreC (alpha) subunits. Three heterotrimers associate to form the active enzyme.

It is found in the cytoplasm. The catalysed reaction is urea + 2 H2O + H(+) = hydrogencarbonate + 2 NH4(+). It participates in nitrogen metabolism; urea degradation; CO(2) and NH(3) from urea (urease route): step 1/1. The sequence is that of Urease subunit gamma from Paraburkholderia phytofirmans (strain DSM 17436 / LMG 22146 / PsJN) (Burkholderia phytofirmans).